Here is a 505-residue protein sequence, read N- to C-terminus: Elsinochrome transporter 1 (505 aa).

A compositionally biased stretch (gly residues) spans 1–10 (MALSGLGSGP). Residues 1-25 (MALSGLGSGPEGNPNNHQGKAIPTL) form a disordered region. Residues 35–55 (FLFSWVSFLVPFWSWYPFSPL) form a helical membrane-spanning segment. N-linked (GlcNAc...) asparagine glycans are attached at residues N64 and N80. The interval 221–295 (DTPTGAGKPP…TEKGESLPLT (75 aa)) is disordered. Positions 255 to 267 (TPSSPDRSSSTNS) are enriched in low complexity. Transmembrane regions (helical) follow at residues 313 to 333 (VIFS…FGAE), 348 to 368 (LGLG…LNIV), 391 to 411 (KALL…IGLA), 417 to 437 (ATLV…ANGL), 449 to 469 (VVSG…AIVF), and 479 to 499 (VFWI…WIKP).

It belongs to the major facilitator superfamily. Nitrate/nitrite porter (TC 2.A.1.8) family.

Its subcellular location is the cell membrane. Its function is as follows. Major facilitator-type transporter; part of the gene cluster that mediates the biosynthesis of elsinochromes, pigments consisting of at least four interconvertible tautomers (A, B, C and D) that have a core phenolic quinone to which various side chains are attached and which play an important role in fungal pathogenesis. Once elsinochrome is synthesized, it must be exported outside the fungal cells, which is probably accomplished by the ECT1 transporter, to avoid toxicity. The sequence is that of Elsinochrome transporter 1 from Elsinoe fawcettii (Citrus scab fungus).